The sequence spans 157 residues: UPF0254 protein MTH_1148 (157 aa).

This sequence belongs to the UPF0254 family.

The chain is UPF0254 protein MTH_1148 from Methanothermobacter thermautotrophicus (strain ATCC 29096 / DSM 1053 / JCM 10044 / NBRC 100330 / Delta H) (Methanobacterium thermoautotrophicum).